The following is a 317-amino-acid chain: Large ribosomal subunit protein uL10 (317 aa).

Residues 280–290 are compositionally biased toward low complexity; it reads SASAAPAAGGA. A disordered region spans residues 280–317; it reads SASAAPAAGGATEKKEEAKKPESESEEEDDDMGFGLFD. Basic and acidic residues predominate over residues 291 to 302; that stretch reads TEKKEEAKKPES. Ser302 is subject to Phosphoserine. Ser304 bears the Phosphoserine; by CK1 mark.

Belongs to the universal ribosomal protein uL10 family. In terms of assembly, P0 forms a pentameric complex by interaction with dimers of P1 and P2.

The protein resides in the cytoplasm. The protein localises to the nucleus. Its function is as follows. Ribosomal protein P0 is the functional equivalent of E.coli protein L10. The protein is Large ribosomal subunit protein uL10 (RpLP0) of Drosophila melanogaster (Fruit fly).